Here is a 693-residue protein sequence, read N- to C-terminus: Elongation factor G (693 aa).

The 275-residue stretch at 8 to 282 folds into the tr-type G domain; sequence EKTRNIGIMA…AVIDYLPSPL (275 aa). GTP-binding positions include 17–24, 81–85, and 135–138; these read AHIDAGKT, DTPGH, and NKMD.

The protein belongs to the TRAFAC class translation factor GTPase superfamily. Classic translation factor GTPase family. EF-G/EF-2 subfamily.

The protein resides in the cytoplasm. Functionally, catalyzes the GTP-dependent ribosomal translocation step during translation elongation. During this step, the ribosome changes from the pre-translocational (PRE) to the post-translocational (POST) state as the newly formed A-site-bound peptidyl-tRNA and P-site-bound deacylated tRNA move to the P and E sites, respectively. Catalyzes the coordinated movement of the two tRNA molecules, the mRNA and conformational changes in the ribosome. The protein is Elongation factor G of Staphylococcus aureus (strain Mu3 / ATCC 700698).